The chain runs to 995 residues: DNA polymerase (995 aa).

Belongs to the DNA polymerase type-B family.

It catalyses the reaction DNA(n) + a 2'-deoxyribonucleoside 5'-triphosphate = DNA(n+1) + diphosphate. The sequence is that of DNA polymerase (RF1) from Kluyveromyces lactis (strain ATCC 8585 / CBS 2359 / DSM 70799 / NBRC 1267 / NRRL Y-1140 / WM37) (Yeast).